Consider the following 956-residue polypeptide: Plasma membrane ATPase 3 (956 aa).

Residues 1-65 (MGEKPEVLDA…EKKESKFSKF (65 aa)) lie on the Cytoplasmic side of the membrane. Residues 66–85 (LGFMWNPLSWVMEAAAIMAI) form a helical membrane-spanning segment. Residues 86–97 (ALANGGGKPPDW) are Extracellular-facing. Residues 98-118 (QDFVGIITLLIINSTISFIEE) form a helical membrane-spanning segment. Residues 119–247 (NNAGNAAAAL…GHFQKVLTAI (129 aa)) lie on the Cytoplasmic side of the membrane. A helical membrane pass occupies residues 248 to 268 (GNFCICSIAVGMIIEIIVMYP). Residues 269–278 (IQHRKYRPGI) are Extracellular-facing. Residues 279–300 (DNLLVLLIGGIPIAMPTVLSVT) traverse the membrane as a helical segment. Residues 301–647 (MAIGSHRLAQ…TSRAIFQRMK (347 aa)) lie on the Cytoplasmic side of the membrane. The active-site 4-aspartylphosphate intermediate is the aspartate 333. Mg(2+) contacts are provided by aspartate 592 and aspartate 596. The helical transmembrane segment at 648–669 (NYTIYAVSITIRIVLGFMLLAL) threads the bilayer. Residues 670–674 (IWQFD) are Extracellular-facing. Residues 675 to 697 (FPPFMVLIIAILNDGTIMTISKD) form a helical membrane-spanning segment. The Cytoplasmic segment spans residues 698 to 713 (RVKPSPLPDSWKLAEI). Residues 714 to 734 (FTTGVVLGGYLAMMTVIFFWA) traverse the membrane as a helical segment. The Extracellular segment spans residues 735–759 (AYKTNFFPRVFGVSTLEKTATDDFR). A helical membrane pass occupies residues 760 to 780 (KLASAIYLQVSTISQALIFVT). At 781–792 (RSRSWSFMERPG) the chain is on the cytoplasmic side. A helical transmembrane segment spans residues 793–813 (LLLVVAFFIAQLVATLIAVYA). The Extracellular segment spans residues 814-822 (NWSFAAIEG). The helical transmembrane segment at 823–843 (IGWGWAGVIWLYNIVFYIPLD) threads the bilayer. Topologically, residues 844–956 (LXXFLIRYAL…IETIQQAYTV (113 aa)) are cytoplasmic.

The protein belongs to the cation transport ATPase (P-type) (TC 3.A.3) family. Type IIIA subfamily. As to expression, expressed in roots, stems, leaves from both vegetative and flowering plants, and flowers at early and late stages of development with highest expression levels found in flowers and root tissue.

The protein localises to the cell membrane. The enzyme catalyses ATP + H2O + H(+)(in) = ADP + phosphate + 2 H(+)(out). The plasma membrane ATPase of plants and fungi is a hydrogen ion pump. The proton gradient it generates drives the active transport of nutrients by H(+)-symport. The resulting external acidification and/or internal alkinization may mediate growth responses. The protein is Plasma membrane ATPase 3 (PMA3) of Nicotiana plumbaginifolia (Leadwort-leaved tobacco).